A 432-amino-acid polypeptide reads, in one-letter code: Glycerophosphocholine acyltransferase 1 (432 aa).

At 1-110 (MYKLDNNDID…DSIFFKNSSR (110 aa)) the chain is on the cytoplasmic side. A Phosphoserine modification is found at Ser-78. A helical transmembrane segment spans residues 111–131 (LEKAFYPFTLFNIFFIGFLMG). A topological domain (lumenal) is located at residue Arg-132. A helical transmembrane segment spans residues 133–153 (FPEWFHVYYTILFFVLMPIRF). Over 154–162 (YTYYKTKNH) the chain is Cytoplasmic. Residues 163 to 183 (YFLADFCYFVNMLCLLFIWIF) traverse the membrane as a helical segment. Over 184–187 (PYSY) the chain is Lumenal. The helical transmembrane segment at 188–208 (SLFQSCFAFTFGTLCFAVITW) threads the bilayer. Topologically, residues 209–221 (RNSLVIHSIDKTT) are cytoplasmic. The chain crosses the membrane as a helical span at residues 222–242 (SCFIHIIPPCVMYVIYHGLPL). At 243–263 (EYKIERFPGAIIQSELDIKKN) the chain is on the lumenal side. Residues 264–284 (ILWTSLYYLVWQSLYHYFITL) form a helical membrane-spanning segment. Residues 285 to 318 (KKSSKIKSGERMTSFEYLTTHQFKNFWAVKLRSP) lie on the Cytoplasmic side of the membrane. Residues 319–339 (WPMIIYTLSQYFYQLFTMLLC) form a helical membrane-spanning segment. The Lumenal segment spans residues 340 to 346 (GIWIRYK). A helical transmembrane segment spans residues 347–369 (LAAALFLTIVFLWASHNGATYYI). At 370–432 (DHYGKNFEKE…DSSSVSSKSD (63 aa)) the chain is on the cytoplasmic side. Residues 413–432 (LNVNRDEDFDDSSSVSSKSD) form a disordered region.

It belongs to the GPC1 family.

Its subcellular location is the membrane. The catalysed reaction is sn-glycerol 3-phosphocholine + an acyl-CoA = a 1-acyl-sn-glycero-3-phosphocholine + CoA. It catalyses the reaction sn-glycero-3-phosphoethanolamine + an acyl-CoA = a monoacyl-sn-glycero-3-phosphoethanolamine + CoA. The enzyme catalyses sn-glycero-3-phosphoethanolamine + (9Z)-octadecenoyl-CoA = (9Z-octadecenoyl)-sn-glycero-3-phosphoethanolamine + CoA. It carries out the reaction sn-glycerol 3-phosphocholine + hexadecanoyl-CoA = hexadecanoyl-sn-glycero-3-phosphocholine + CoA. The catalysed reaction is (9Z,12Z)-octadecadienoyl-CoA + sn-glycerol 3-phosphocholine = (9Z,12Z-octadecadienoyl)-sn-glycero-3-phosphocholine + CoA. It catalyses the reaction (12R)-hydroxy-(9Z)-octadecenoyl-CoA + sn-glycerol 3-phosphocholine = (12R-hydroxy-9Z-octadecenoyl)-sn-glycero-3-phosphocholine + CoA. The enzyme catalyses (9Z,12Z,15Z)-octadecatrienoyl-CoA + sn-glycerol 3-phosphocholine = (9Z,12Z,15Z-octadecatrienoyl)-sn-glycero-3-phosphocholine + CoA. It carries out the reaction sn-glycerol 3-phosphocholine + (9Z)-octadecenoyl-CoA = (9Z-octadecenoyl)-sn-glycero-3-phosphocholine + CoA. The catalysed reaction is 1-(9Z-octadecenoyl)-sn-glycero-3-phosphoethanolamine + sn-glycerol 3-phosphocholine = (9Z-octadecenoyl)-sn-glycero-3-phosphocholine + sn-glycero-3-phosphoethanolamine. With respect to regulation, the GPCAT activity is sensitive to N-ethylmaleimide, phenanthroline, and divalent cations including Ca(2+), Mg(2+), Mn(2+) and Zn(2+). The activity is also inhibited by glycerol-3-phosphate (G3P). Functionally, glycerophosphocholine acyltransferase (GPCAT) that utilizes acyl-CoA to acylate glycero-3-phosphocholine (GPC), forming lysophosphatidylcholine (LPC). Shows broad acyl specificities with a preference for 16:0-CoA, polyunsaturated acyl-CoA, and the hydroxylated ricinoleoyl-CoA. Also catalyzes the acylation of glycero-3-phosphoethanolamine (GPE) with acyl-CoA. In addition to acyl-CoA, GPCAT efficiently utilizes LPC and lysophosphatidylethanolamine (LPE) as acyl donors in the acylation of GPC. Contributes to the maintenance of phosphatidylcholine (PC) homeostasis and might also have specific functions in acyl editing of PC, such as transferring acyl groups modified at the sn-2 position of PC to the sn-1. Involved in postsynthetic PC remodeling that produces more saturated PC species. The chain is Glycerophosphocholine acyltransferase 1 from Saccharomyces cerevisiae (strain ATCC 204508 / S288c) (Baker's yeast).